Consider the following 278-residue polypeptide: Large ribosomal subunit protein uL2 (278 aa).

The segment at 201 to 278 (HGNINDGKAG…IMRSRHQRKK (78 aa)) is disordered. Residues 210–221 (GRSRWRGKRPHV) show a composition bias toward basic residues.

It belongs to the universal ribosomal protein uL2 family. Part of the 50S ribosomal subunit. Forms a bridge to the 30S subunit in the 70S ribosome.

Functionally, one of the primary rRNA binding proteins. Required for association of the 30S and 50S subunits to form the 70S ribosome, for tRNA binding and peptide bond formation. It has been suggested to have peptidyltransferase activity; this is somewhat controversial. Makes several contacts with the 16S rRNA in the 70S ribosome. The protein is Large ribosomal subunit protein uL2 of Sinorhizobium fredii (strain NBRC 101917 / NGR234).